Here is a 395-residue protein sequence, read N- to C-terminus: ATP phosphoribosyltransferase regulatory subunit (395 aa).

Belongs to the class-II aminoacyl-tRNA synthetase family. HisZ subfamily. As to quaternary structure, heteromultimer composed of HisG and HisZ subunits.

The protein localises to the cytoplasm. It participates in amino-acid biosynthesis; L-histidine biosynthesis; L-histidine from 5-phospho-alpha-D-ribose 1-diphosphate: step 1/9. In terms of biological role, required for the first step of histidine biosynthesis. May allow the feedback regulation of ATP phosphoribosyltransferase activity by histidine. The sequence is that of ATP phosphoribosyltransferase regulatory subunit from Stutzerimonas stutzeri (Pseudomonas stutzeri).